The chain runs to 1117 residues: MFGGELDDAFGVFEGKVPKSLKEESKNSQNSQNSQKIKRTLTDKNASNQEQGTKKLESSVGEQESATKRAKIENLKDNQDLIPNNDVNGIHINNSAVADTKHKPKIGDIAADDISNEVSIKNEGDTIPEATVADSFEQEASLQVAGKVGMTEAKSSTEEVVELRHQVRHQVSIPPNYDYVPISKHKSPIPPARTYPFTLDPFQAVSIACIERQESVLVSAHTSAGKTVVAEYAVAQSLRDKQRVIYTSPIKALSNQKYRELLAEFGDVGLMTGDVTINPDATCLVMTTEILRSMLYRGSEVMREVAWVIFDEIHYMRDKERGVVWEETIILLPDKSHFVFLSATIPNAMQFAEWITKIHRQPCHVVYTDFRPTPLQHYLFPSGSDGIHLVVDEKSNFREENFQRAMSALMEKQGDDPAAMATKGNAKKGKTGKGGVKGPSDIYKIVKMIMVKNYNPVIVFSFSKRECEALALQMSKLDMNDQTERDLVTTIFNNAVNQLSEKDRELPQIEHILPLLRRGIGIHHSGLLPILKEVIEILFQEGLLKVLFATETFSIGLNMPAKTVVFTNVRKFDGKTFRWISGGEYIQMSGRAGRRGLDDRGIVILMIDEKMDPPVAKSMLKGEADRLDSAFHLSYNMILNLLRVEGISPEFMLERCFFQFQNSLEVPKLEAKLEESQQHYDSFTILDERPLEEYHTLKTQLERYRTDVRTVVNHPNFCLSFLQGGRLVRVKVGNEDFDWGVVVNVSKRPLPKGQSNEYLPQESYIVHTLVMVASDTGPLRIRSGHLPEVHPPAAEDKGKFEVVPFLLSSLDGIAHIRVFLPNDLKSQGQKLTVGKALSEVKRRFPEGITLLDPVENMNIKEPTFIKLMKKVNILESRLLSNPLHNFSELEEKYAEYLRKLALLEEVKDLKKKLSKARSIMQLDELNSRKRVLRRLGFTTSDDVIEVKGRVACEISSGDGLLLTELIFNGMFNDLTPEQCAALLSCLVFQEKSEVENQRMKEELAGPLKILQEMARRIAKVSKESKQELNEEEYVNSFKPSLMEVVYAWAHGASFAQICKMTDVYEGSLIRMFRRLEELIRQMVDAAKVIGNTSLQQKMEDTIACIHRDIVFSASLYL.

The disordered stretch occupies residues 19–86 (KSLKEESKNS…DNQDLIPNND (68 aa)). The span at 65-79 (SATKRAKIENLKDNQ) shows a compositional bias: basic and acidic residues. The Helicase ATP-binding domain maps to 207 to 363 (IACIERQESV…WITKIHRQPC (157 aa)). 220-227 (AHTSAGKT) lines the ATP pocket. The short motif at 311–314 (DEIH) is the DEIH box element. A disordered region spans residues 414 to 433 (GDDPAAMATKGNAKKGKTGK). In terms of domain architecture, Helicase C-terminal spans 441 to 642 (DIYKIVKMIM…LSYNMILNLL (202 aa)).

Belongs to the helicase family. SKI2 subfamily. In terms of assembly, component of the TRAMP complex composed of at least cid14, mtr4, and air1.

It is found in the nucleus. Component of the TRAMP complex which has a poly(A) RNA polymerase activity and is involved in a post-transcriptional quality control mechanism limiting inappropriate expression of genetic information. Polyadenylation is required for the degradative activity of the exosome on several of its nuclear RNA substrates. Required for heterochromatic gene silencing at centromeric repeats by either exosome- or RNAi-mediated degradation of heterochromatic transcripts. This is ATP-dependent RNA helicase mtr4 (mtr4) from Schizosaccharomyces pombe (strain 972 / ATCC 24843) (Fission yeast).